Consider the following 264-residue polypeptide: Thymidylate synthase (264 aa).

Arg21 provides a ligand contact to dUMP. (6R)-5,10-methylene-5,6,7,8-tetrahydrofolate is bound at residue His51. 126–127 (RR) lines the dUMP pocket. Cys146 serves as the catalytic Nucleophile. DUMP is bound by residues 166 to 169 (RSCD), Asn177, and 207 to 209 (HLY). Asp169 is a (6R)-5,10-methylene-5,6,7,8-tetrahydrofolate binding site. Ala263 lines the (6R)-5,10-methylene-5,6,7,8-tetrahydrofolate pocket.

It belongs to the thymidylate synthase family. Bacterial-type ThyA subfamily. In terms of assembly, homodimer.

Its subcellular location is the cytoplasm. The enzyme catalyses dUMP + (6R)-5,10-methylene-5,6,7,8-tetrahydrofolate = 7,8-dihydrofolate + dTMP. Its pathway is pyrimidine metabolism; dTTP biosynthesis. Functionally, catalyzes the reductive methylation of 2'-deoxyuridine-5'-monophosphate (dUMP) to 2'-deoxythymidine-5'-monophosphate (dTMP) while utilizing 5,10-methylenetetrahydrofolate (mTHF) as the methyl donor and reductant in the reaction, yielding dihydrofolate (DHF) as a by-product. This enzymatic reaction provides an intracellular de novo source of dTMP, an essential precursor for DNA biosynthesis. This chain is Thymidylate synthase, found in Salmonella typhi.